Consider the following 200-residue polypeptide: Large ribosomal subunit protein bL9 (200 aa).

The protein belongs to the bacterial ribosomal protein bL9 family.

In terms of biological role, binds to the 23S rRNA. This chain is Large ribosomal subunit protein bL9, found in Ruegeria pomeroyi (strain ATCC 700808 / DSM 15171 / DSS-3) (Silicibacter pomeroyi).